The sequence spans 458 residues: Exodeoxyribonuclease 7 large subunit (458 aa).

Belongs to the XseA family. As to quaternary structure, heterooligomer composed of large and small subunits.

The protein resides in the cytoplasm. It catalyses the reaction Exonucleolytic cleavage in either 5'- to 3'- or 3'- to 5'-direction to yield nucleoside 5'-phosphates.. In terms of biological role, bidirectionally degrades single-stranded DNA into large acid-insoluble oligonucleotides, which are then degraded further into small acid-soluble oligonucleotides. The chain is Exodeoxyribonuclease 7 large subunit from Geobacter sp. (strain M21).